The following is a 196-amino-acid chain: Alpha-crystallin A chain (196 aa).

The residue at position 1 (M1) is an N-acetylmethionine. The interval 1 to 63 (MDVTIQHPWF…RTVLDSGISE (63 aa)) is required for complex formation with BFSP1 and BFSP2. A Deamidated glutamine; partial modification is found at Q6. S45 carries the phosphoserine modification. Deamidated glutamine; partial is present on Q50. One can recognise a sHSP domain in the interval 76 to 185 (HAGNPKNNPV…GHSERAIPVS (110 aa)). N6-acetyllysine occurs at positions 93 and 122. H123 contacts Zn(2+). Position 124 is a deamidated asparagine; partial (N124). Positions 125 and 130 each coordinate Zn(2+). S145 is modified (phosphoserine). N146 carries the deamidated asparagine; partial modification. A disordered region spans residues 168 to 196 (KVQSGLDAGHSERAIPVSREEKPSSAPSS). The residue at position 170 (Q170) is a Deamidated glutamine; partial. Over residues 176 to 190 (GHSERAIPVSREEKP) the composition is skewed to basic and acidic residues. H177 is a Zn(2+) binding site. A glycan (O-linked (GlcNAc) serine) is linked at S185.

It belongs to the small heat shock protein (HSP20) family. Heteropolymer composed of three CRYAA and one CRYAB subunits. Inter-subunit bridging via zinc ions enhances stability, which is crucial as there is no protein turn over in the lens. Can also form homodimers and homotetramers (dimers of dimers) which serve as the building blocks of homooligomers. Within homooligomers, the zinc-binding motif is created from residues of 3 different molecules. His-123 and Glu-125 from one molecule are ligands of the zinc ion, and His-130 and His-177 residues from additional molecules complete the site with tetrahedral coordination geometry. Part of a complex required for lens intermediate filament formation composed of BFSP1, BFSP2 and CRYAA. Acetylation at Lys-93 may increase chaperone activity. Post-translationally, undergoes age-dependent proteolytical cleavage at the C-terminus.

The protein localises to the cytoplasm. Its subcellular location is the nucleus. In terms of biological role, contributes to the transparency and refractive index of the lens. Acts as a chaperone, preventing aggregation of various proteins under a wide range of stress conditions. Required for the correct formation of lens intermediate filaments as part of a complex composed of BFSP1, BFSP2 and CRYAA. In Mus musculus (Mouse), this protein is Alpha-crystallin A chain (Cryaa).